Here is a 420-residue protein sequence, read N- to C-terminus: Probable serine hydroxymethyltransferase (420 aa).

(6S)-5,6,7,8-tetrahydrofolate contacts are provided by residues Leu-121 and 125–127 (GHL). N6-(pyridoxal phosphate)lysine is present on Lys-230. Residues Glu-246 and 354–356 (SPF) each bind (6S)-5,6,7,8-tetrahydrofolate.

It belongs to the SHMT family. As to quaternary structure, homodimer. Requires pyridoxal 5'-phosphate as cofactor.

The protein localises to the cytoplasm. It carries out the reaction (6R)-5,10-methylene-5,6,7,8-tetrahydrofolate + glycine + H2O = (6S)-5,6,7,8-tetrahydrofolate + L-serine. It functions in the pathway one-carbon metabolism; tetrahydrofolate interconversion. Functionally, catalyzes the reversible interconversion of serine and glycine with tetrahydrofolate (THF) serving as the one-carbon carrier. This reaction serves as the major source of one-carbon groups required for the biosynthesis of purines, thymidylate, methionine, and other important biomolecules. This chain is Probable serine hydroxymethyltransferase, found in Rickettsia bellii (strain RML369-C).